Here is a 441-residue protein sequence, read N- to C-terminus: Lysine histidine transporter-like 2 (441 aa).

At 1-32 the chain is on the cytoplasmic side; that stretch reads MEKSQSSPTKDASTKQKNVDDWLPITSSRNAK. Residues 33-53 form a helical membrane-spanning segment; sequence WWYSAFHNVTAMVGAGVLSLP. Over 54–58 the chain is Extracellular; the sequence is YAMSN. Residues 59 to 79 form a helical membrane-spanning segment; sequence LGWGPGVTIMIMSWLITFYTL. Residues 80–110 are Cytoplasmic-facing; the sequence is WQMVQMHEMVPGKRFDRYHELGQHAFGEKLG. A helical membrane pass occupies residues 111 to 131; the sequence is LWIVVPQQLIVEVGVDIVYMV. Residues 132–155 lie on the Extracellular side of the membrane; sequence TGGKSLKKIHDLLCTDCKNIRTTY. Transmembrane regions (helical) follow at residues 156–176 and 177–197; these read WIMIFASIHFVLAHLPNFNSI and SIVSLAAAVMSLSYSTIAWAT. Over 198–222 the chain is Extracellular; it reads SVKKGVHPNVDYSSRASTTSGNVFN. The chain crosses the membrane as a helical span at residues 223–243; that stretch reads FLNALGDVAFAYAGHNVVLEI. Topologically, residues 244–264 are cytoplasmic; sequence QATIPSTPEKPSKIAMWKGVV. The chain crosses the membrane as a helical span at residues 265-285; the sequence is VAYIVVAICYFPVAFVCYYIF. Residues 286-300 are Extracellular-facing; the sequence is GNSVDDNILMTLEKP. Residues 301–321 form a helical membrane-spanning segment; that stretch reads IWLIAIANAFVVVHVIGSYQI. At 322 to 347 the chain is on the cytoplasmic side; it reads YAMPVFDMLETFLVKKMMFAPSFKLR. Residues 348–370 form a helical membrane-spanning segment; sequence FITRTLYVAFTMFVAICIPFFGG. Residues 371–373 lie on the Extracellular side of the membrane; sequence LLG. A helical transmembrane segment spans residues 374–396; that stretch reads FFGGFAFAPTTYYLPCIMWLCIK. Over 397-406 the chain is Cytoplasmic; sequence KPKKYGLSWC. A helical transmembrane segment spans residues 407–427; sequence INWFCIVVGVILTILAPIGGL. The Extracellular portion of the chain corresponds to 428–441; it reads RTIIISAKNYEFFS.

The protein belongs to the amino acid/polyamine transporter 2 family. Amino acid/auxin permease (AAAP) (TC 2.A.18.2) subfamily.

The protein resides in the cell membrane. Functionally, amino acid transporter. The sequence is that of Lysine histidine transporter-like 2 from Arabidopsis thaliana (Mouse-ear cress).